A 374-amino-acid chain; its full sequence is Anhydro-N-acetylmuramic acid kinase (374 aa).

12 to 19 (GTSLDGID) is a binding site for ATP.

This sequence belongs to the anhydro-N-acetylmuramic acid kinase family.

The catalysed reaction is 1,6-anhydro-N-acetyl-beta-muramate + ATP + H2O = N-acetyl-D-muramate 6-phosphate + ADP + H(+). Its pathway is amino-sugar metabolism; 1,6-anhydro-N-acetylmuramate degradation. The protein operates within cell wall biogenesis; peptidoglycan recycling. In terms of biological role, catalyzes the specific phosphorylation of 1,6-anhydro-N-acetylmuramic acid (anhMurNAc) with the simultaneous cleavage of the 1,6-anhydro ring, generating MurNAc-6-P. Is required for the utilization of anhMurNAc either imported from the medium or derived from its own cell wall murein, and thus plays a role in cell wall recycling. The sequence is that of Anhydro-N-acetylmuramic acid kinase from Sodalis glossinidius (strain morsitans).